A 601-amino-acid chain; its full sequence is Elongation factor 4 (601 aa).

The tr-type G domain maps to 7 to 189 (RNIRNFSIIA…AIVHRIPPPK (183 aa)). GTP-binding positions include 19 to 24 (DHGKST) and 136 to 139 (NKID).

The protein belongs to the TRAFAC class translation factor GTPase superfamily. Classic translation factor GTPase family. LepA subfamily.

The protein localises to the cell inner membrane. The catalysed reaction is GTP + H2O = GDP + phosphate + H(+). In terms of biological role, required for accurate and efficient protein synthesis under certain stress conditions. May act as a fidelity factor of the translation reaction, by catalyzing a one-codon backward translocation of tRNAs on improperly translocated ribosomes. Back-translocation proceeds from a post-translocation (POST) complex to a pre-translocation (PRE) complex, thus giving elongation factor G a second chance to translocate the tRNAs correctly. Binds to ribosomes in a GTP-dependent manner. This Xanthomonas campestris pv. campestris (strain 8004) protein is Elongation factor 4.